Reading from the N-terminus, the 842-residue chain is Outer membrane usher protein AggC (842 aa).

A signal peptide spans 1–21 (MKTSSFIIVILLCFRIENVIA). An intrachain disulfide couples Cys-819 to Cys-841.

Belongs to the fimbrial export usher family.

It is found in the cell outer membrane. Its function is as follows. Involved in the export and assembly of the AAF/I fimbriae subunits across the outer membrane. In Escherichia coli, this protein is Outer membrane usher protein AggC (aggC).